A 1249-amino-acid chain; its full sequence is Fanconi anemia group J protein (1249 aa).

The Helicase ATP-binding domain occupies 11–442 (GGVKIYFPYK…KDHEPLRAVC (432 aa)). Residues 102 to 127 (QGTSRHFNYPSTPPSERNGTSSTCQD) show a composition bias toward polar residues. Residues 102-131 (QGTSRHFNYPSTPPSERNGTSSTCQDSPEK) form a disordered region. Residues 158–175 (KKRIRPLETTQQIRKRHC) carry the Nuclear localization signal motif. 185 to 192 (AKVDSGKT) lines the ATP pocket. [4Fe-4S] cluster-binding residues include cysteine 283, cysteine 298, cysteine 310, and cysteine 350. The short motif at 393–396 (DEAH) is the DEAH box element. Serine 505, serine 927, serine 930, serine 956, serine 990, serine 1004, and serine 1032 each carry phosphoserine. The tract at residues 888 to 1063 (HQKVLNVSIK…ESSNLTVNTS (176 aa)) is interaction with BRCA1. 2 disordered regions span residues 1018–1042 (KATP…EKME) and 1108–1127 (VSEE…EAED). Over residues 1023 to 1032 (LGSSENSASS) the composition is skewed to polar residues. Over residues 1110–1122 (EEDKQSTSNRDFE) the composition is skewed to basic and acidic residues. Serine 1237 is subject to Phosphoserine. Residue lysine 1249 is modified to N6-acetyllysine.

Belongs to the DEAD box helicase family. DEAH subfamily. In terms of assembly, interacts with the replication protein A complex (RPA) via the RPA1 subunit; following DNA damage they colocalize in foci in the nucleus. Binds directly to the BRCT domains of BRCA1. Interacts with the CIA complex components CIAO1, CIAO2B and MMS19. It depends on [4Fe-4S] cluster as a cofactor. In terms of processing, phosphorylated. Phosphorylation is necessary for interaction with BRCA1, and is cell-cycle regulated. Acetylation at Lys-1249 facilitates DNA end processing required for repair and checkpoint signaling. Ubiquitously expressed, with highest levels in testis.

It localises to the nucleus. The protein localises to the cytoplasm. It catalyses the reaction Couples ATP hydrolysis with the unwinding of duplex DNA at the replication fork by translocating in the 5'-3' direction. This creates two antiparallel DNA single strands (ssDNA). The leading ssDNA polymer is the template for DNA polymerase III holoenzyme which synthesizes a continuous strand.. The enzyme catalyses ATP + H2O = ADP + phosphate + H(+). Helicase activity on forked substrates is stimulated by replication protein A complex heterotrimer (RPA1, RPA2, RPA3). Helicase activity on G-quadruplex DNA is stimulated 3-fold by RPA, and inhibited by MSH2/MSH6. Unwinding of G-quadruplex DNA is inhibited by ATP-gamma-S and telomestatin (TMS); TMA does not inhibit unwinding of forked-duplex DNA. Helicase activity on dsDNA and G-quadruplex DNA is inhibited by porphyrin derivatives meso-tetra (N-methyl-4-pyridyl) porphine tetra tosylate (T4) and N-methyl mesoporphyrin IX (NMM). Functionally, DNA-dependent ATPase and 5'-3' DNA helicase required for the maintenance of chromosomal stability. Acts late in the Fanconi anemia pathway, after FANCD2 ubiquitination. Involved in the repair of DNA double-strand breaks by homologous recombination in a manner that depends on its association with BRCA1. Involved in the repair of abasic sites at replication forks by promoting the degradation of DNA-protein cross-links: acts by catalyzing unfolding of HMCES DNA-protein cross-link via its helicase activity, exposing the underlying DNA and enabling cleavage of the DNA-protein adduct by the SPRTN metalloprotease. Can unwind RNA:DNA substrates. Unwinds G-quadruplex DNA; unwinding requires a 5'-single stranded tail. The sequence is that of Fanconi anemia group J protein from Homo sapiens (Human).